A 229-amino-acid chain; its full sequence is Putative N-acetylmannosamine-6-phosphate 2-epimerase (229 aa).

This sequence belongs to the NanE family.

It carries out the reaction an N-acyl-D-glucosamine 6-phosphate = an N-acyl-D-mannosamine 6-phosphate. It functions in the pathway amino-sugar metabolism; N-acetylneuraminate degradation; D-fructose 6-phosphate from N-acetylneuraminate: step 3/5. Converts N-acetylmannosamine-6-phosphate (ManNAc-6-P) to N-acetylglucosamine-6-phosphate (GlcNAc-6-P). The sequence is that of Putative N-acetylmannosamine-6-phosphate 2-epimerase from Escherichia coli O7:K1 (strain IAI39 / ExPEC).